The following is a 217-amino-acid chain: MMANPPTLPISDHSGGGSQSQQPVSTPAFRTFLSRLSSSIRQSLSQRRPWLELVDRSAISRPESLTDAYSRIRRNLPYFKVNYVTIVSLVLALSLLSHPFSLLVLLCLFCAWIFLYLFRPSDQPLVVLGRTFSDRETLGVLVILTIVVVFLTSVGSLLTSALMIGFGIVCLHGAFRVPEDLFLDDQEPANTGLLSFLSGAATSAAVAAASTPASGRV.

The interval 1–24 (MMANPPTLPISDHSGGGSQSQQPV) is disordered. Transmembrane regions (helical) follow at residues 76-96 (LPYF…LSLL), 98-118 (HPFS…LYLF), 138-158 (LGVL…GSLL), 162-182 (LMIG…EDLF), and 193-213 (LLSF…STPA).

Belongs to the PRA1 family. As to quaternary structure, interacts with PRA1B1, PRA1B2, PRA1B4, PRA1B5, PRA1B6 and PRA1E. In terms of tissue distribution, expressed in hypocotyls and shoot apex.

Its subcellular location is the endosome membrane. In terms of biological role, may be involved in both secretory and endocytic intracellular trafficking in the endosomal/prevacuolar compartments. The protein is PRA1 family protein B3 (PRA1B3) of Arabidopsis thaliana (Mouse-ear cress).